The chain runs to 337 residues: HTH-type transcriptional regulator DegA (337 aa).

The HTH lacI-type domain occupies Met1–Gly57. The segment at residues Ile5–Asn24 is a DNA-binding region (H-T-H motif). Residues Ala300–Lys319 form a disordered region.

Involved in the control of degradation of B.subtilis amidophosphoribosyltransferase (purF). Probably activates the gene for a degradative protease. The sequence is that of HTH-type transcriptional regulator DegA (degA) from Bacillus subtilis (strain 168).